The chain runs to 424 residues: Virion nicking-joining enzyme (424 aa).

PLD phosphodiesterase domains are found at residues 110–137 and 320–346; these read LGGV…DWRS and YSRV…TGNY.

This sequence belongs to the orthopoxvirus OPG042 family.

It is found in the virion. Its function is as follows. DNA nicking enzyme that cleaves extruded cruciform DNA at its tip. Probably nicks viral hairpins. In Vaccinia virus (strain Western Reserve) (VACV), this protein is Virion nicking-joining enzyme (OPG042).